Reading from the N-terminus, the 195-residue chain is Thymidylate kinase (195 aa).

Residue 7-14 (GIDGSGKT) coordinates ATP.

The protein belongs to the thymidylate kinase family.

The catalysed reaction is dTMP + ATP = dTDP + ADP. Functionally, phosphorylation of dTMP to form dTDP in both de novo and salvage pathways of dTTP synthesis. This is Thymidylate kinase (tmk) from Aquifex aeolicus (strain VF5).